The following is an 899-amino-acid chain: Protein translocase subunit SecA (899 aa).

ATP contacts are provided by residues Gln-87, 105 to 109 (GEGKT), and Asp-512. Disordered stretches follow at residues 573–592 (RRID…PGSS) and 861–899 (ITVN…CCGK). Cys-885, Cys-887, Cys-896, and Cys-897 together coordinate Zn(2+).

The protein belongs to the SecA family. As to quaternary structure, monomer and homodimer. Part of the essential Sec protein translocation apparatus which comprises SecA, SecYEG and auxiliary proteins SecDF-YajC and YidC. Zn(2+) is required as a cofactor.

It is found in the cell inner membrane. Its subcellular location is the cytoplasm. The catalysed reaction is ATP + H2O + cellular proteinSide 1 = ADP + phosphate + cellular proteinSide 2.. Part of the Sec protein translocase complex. Interacts with the SecYEG preprotein conducting channel. Has a central role in coupling the hydrolysis of ATP to the transfer of proteins into and across the cell membrane, serving as an ATP-driven molecular motor driving the stepwise translocation of polypeptide chains across the membrane. This is Protein translocase subunit SecA from Trichlorobacter lovleyi (strain ATCC BAA-1151 / DSM 17278 / SZ) (Geobacter lovleyi).